Here is a 1199-residue protein sequence, read N- to C-terminus: DNA-directed RNA polymerase subunit beta (1199 aa).

Residues 1177-1199 (EQEEKKAKEAEQETAEKEETKTE) form a disordered region.

The protein belongs to the RNA polymerase beta chain family. The RNAP catalytic core consists of 2 alpha, 1 beta, 1 beta' and 1 omega subunit. When a sigma factor is associated with the core the holoenzyme is formed, which can initiate transcription.

The catalysed reaction is RNA(n) + a ribonucleoside 5'-triphosphate = RNA(n+1) + diphosphate. Functionally, DNA-dependent RNA polymerase catalyzes the transcription of DNA into RNA using the four ribonucleoside triphosphates as substrates. The chain is DNA-directed RNA polymerase subunit beta from Ligilactobacillus salivarius (strain UCC118) (Lactobacillus salivarius).